The following is a 252-amino-acid chain: Triosephosphate isomerase (252 aa).

10–12 is a substrate binding site; the sequence is NWK. Catalysis depends on histidine 96, which acts as the Electrophile. Residue glutamate 168 is the Proton acceptor of the active site. Residues glycine 174, serine 214, and 235–236 contribute to the substrate site; that span reads GG.

The protein belongs to the triosephosphate isomerase family. Homodimer.

The protein resides in the cytoplasm. The catalysed reaction is D-glyceraldehyde 3-phosphate = dihydroxyacetone phosphate. Its pathway is carbohydrate biosynthesis; gluconeogenesis. The protein operates within carbohydrate degradation; glycolysis; D-glyceraldehyde 3-phosphate from glycerone phosphate: step 1/1. In terms of biological role, involved in the gluconeogenesis. Catalyzes stereospecifically the conversion of dihydroxyacetone phosphate (DHAP) to D-glyceraldehyde-3-phosphate (G3P). The polypeptide is Triosephosphate isomerase (Streptococcus mutans serotype c (strain ATCC 700610 / UA159)).